We begin with the raw amino-acid sequence, 119 residues long: Beta-2-microglobulin (119 aa).

Residues 1–20 (MARSVVVSLFVLLALAGLEA) form the signal peptide. One can recognise an Ig-like C1-type domain in the interval 25–114 (PKIQVYSRHP…VTFQTPKTVK (90 aa)).

It belongs to the beta-2-microglobulin family. In terms of assembly, heterodimer of an alpha chain and a beta chain. Beta-2-microglobulin is the beta-chain of major histocompatibility complex class I molecules.

It localises to the secreted. Component of the class I major histocompatibility complex (MHC). Involved in the presentation of peptide antigens to the immune system. The chain is Beta-2-microglobulin (B2M) from Brachyteles arachnoides (Southern muriqui).